The sequence spans 89 residues: Bombyxin B-1 (89 aa).

The first 19 residues, 1–19 (MKTSVMFMLVIVISLMCSG), serve as a signal peptide directing secretion. 3 disulfide bridges follow: Cys-29/Cys-75, Cys-41/Cys-88, and Cys-74/Cys-79. The propeptide at 48–66 (GGAQYAPYFWTRQYLGSRG) is c peptide like.

The protein belongs to the insulin family. In terms of assembly, heterodimer of a B chain and an A chain linked by two disulfide bonds.

It localises to the secreted. Its function is as follows. Brain peptide responsible for activation of prothoracic glands to produce ecdysone in insects. This chain is Bombyxin B-1 (BBXB1), found in Bombyx mori (Silk moth).